The primary structure comprises 168 residues: Prolyl-tRNA synthetase associated domain-containing protein 1 (168 aa).

This sequence belongs to the PRORSD1 family.

This chain is Prolyl-tRNA synthetase associated domain-containing protein 1 (prorsd1p), found in Xenopus laevis (African clawed frog).